Here is a 129-residue protein sequence, read N- to C-terminus: Histone H2A type 2-C (129 aa).

The disordered stretch occupies residues Met1–Ala22. The residue at position 2 (Ser2) is an N-acetylserine. Position 2 is a phosphoserine; by RPS6KA5 (Ser2). Residue Arg4 is modified to Citrulline; alternate. Arg4 bears the Symmetric dimethylarginine; by PRMT5; alternate mark. Lys6 and Lys10 each carry N6-(2-hydroxyisobutyryl)lysine; alternate. Residue Lys6 is modified to N6-acetyllysine; alternate. Positions Gln7–Ser19 are enriched in basic residues. Lys10 is subject to N6-lactoyllysine; alternate. Residue Lys10 is modified to N6-succinyllysine; alternate. Glycyl lysine isopeptide (Lys-Gly) (interchain with G-Cter in ubiquitin) cross-links involve residues Lys14 and Lys16. An N6-(2-hydroxyisobutyryl)lysine; alternate modification is found at Lys37. Lys37 carries the post-translational modification N6-(beta-hydroxybutyryl)lysine; alternate. Lys37 carries the post-translational modification N6-crotonyllysine; alternate. Lys75 and Lys76 each carry N6-(2-hydroxyisobutyryl)lysine. Position 96 is an N6-(2-hydroxyisobutyryl)lysine; alternate (Lys96). An N6-succinyllysine; alternate modification is found at Lys96. Lys96 is modified (N6-glutaryllysine; alternate). At Lys100 the chain carries N6-glutaryllysine. Residue Gln105 is modified to N5-methylglutamine. Lys119 is subject to N6-(2-hydroxyisobutyryl)lysine; alternate. N6-crotonyllysine; alternate occurs at positions 119 and 120. N6-glutaryllysine; alternate is present on residues Lys119 and Lys120. Residue Lys120 forms a Glycyl lysine isopeptide (Lys-Gly) (interchain with G-Cter in ubiquitin); alternate linkage. Phosphothreonine; by DCAF1 is present on Thr121. Phosphoserine is present on Ser123. An N6-crotonyllysine modification is found at Lys125.

The protein belongs to the histone H2A family. As to quaternary structure, the nucleosome is a histone octamer containing two molecules each of H2A, H2B, H3 and H4 assembled in one H3-H4 heterotetramer and two H2A-H2B heterodimers. The octamer wraps approximately 147 bp of DNA. Post-translationally, deiminated on Arg-4 in granulocytes upon calcium entry. In terms of processing, monoubiquitination of Lys-120 (H2AK119Ub) by RING1, TRIM37 and RNF2/RING2 complex gives a specific tag for epigenetic transcriptional repression and participates in X chromosome inactivation of female mammals. It is involved in the initiation of both imprinted and random X inactivation. Ubiquitinated H2A is enriched in inactive X chromosome chromatin. Ubiquitination of H2A functions downstream of methylation of 'Lys-27' of histone H3 (H3K27me). H2AK119Ub by RNF2/RING2 can also be induced by ultraviolet and may be involved in DNA repair. Following DNA double-strand breaks (DSBs), it is ubiquitinated through 'Lys-63' linkage of ubiquitin moieties by the E2 ligase UBE2N and the E3 ligases RNF8 and RNF168, leading to the recruitment of repair proteins to sites of DNA damage. Ubiquitination at Lys-14 and Lys-16 (H2AK13Ub and H2AK15Ub, respectively) in response to DNA damage is initiated by RNF168 that mediates monoubiquitination at these 2 sites, and 'Lys-63'-linked ubiquitin are then conjugated to monoubiquitin; RNF8 is able to extend 'Lys-63'-linked ubiquitin chains in vitro. H2AK119Ub and ionizing radiation-induced 'Lys-63'-linked ubiquitination (H2AK13Ub and H2AK15Ub) are distinct events. Phosphorylation on Ser-2 (H2AS1ph) is enhanced during mitosis. Phosphorylation on Ser-2 by RPS6KA5/MSK1 directly represses transcription. Acetylation of H3 inhibits Ser-2 phosphorylation by RPS6KA5/MSK1. Phosphorylation at Thr-121 (H2AT120ph) by DCAF1 is present in the regulatory region of many tumor suppresor genes and down-regulates their transcription. Post-translationally, symmetric dimethylation on Arg-4 by the PRDM1/PRMT5 complex may play a crucial role in the germ-cell lineage. In terms of processing, glutamine methylation at Gln-105 (H2AQ104me) by FBL is specifically dedicated to polymerase I. It is present at 35S ribosomal DNA locus and impairs binding of the FACT complex. Crotonylation (Kcr) is specifically present in male germ cells and marks testis-specific genes in post-meiotic cells, including X-linked genes that escape sex chromosome inactivation in haploid cells. Crotonylation marks active promoters and enhancers and confers resistance to transcriptional repressors. It is also associated with post-meiotically activated genes on autosomes. Post-translationally, lactylated in macrophages by EP300/P300 by using lactoyl-CoA directly derived from endogenous or exogenous lactate, leading to stimulates gene transcription.

The protein localises to the nucleus. The protein resides in the chromosome. Functionally, core component of nucleosome. Nucleosomes wrap and compact DNA into chromatin, limiting DNA accessibility to the cellular machineries which require DNA as a template. Histones thereby play a central role in transcription regulation, DNA repair, DNA replication and chromosomal stability. DNA accessibility is regulated via a complex set of post-translational modifications of histones, also called histone code, and nucleosome remodeling. In Bos taurus (Bovine), this protein is Histone H2A type 2-C.